A 300-amino-acid polypeptide reads, in one-letter code: 4-hydroxy-tetrahydrodipicolinate synthase (300 aa).

Pyruvate is bound at residue Thr45. The active-site Proton donor/acceptor is Tyr140. Catalysis depends on Lys169, which acts as the Schiff-base intermediate with substrate. Ile210 is a binding site for pyruvate.

It belongs to the DapA family. Homotetramer; dimer of dimers.

It localises to the cytoplasm. It catalyses the reaction L-aspartate 4-semialdehyde + pyruvate = (2S,4S)-4-hydroxy-2,3,4,5-tetrahydrodipicolinate + H2O + H(+). The protein operates within amino-acid biosynthesis; L-lysine biosynthesis via DAP pathway; (S)-tetrahydrodipicolinate from L-aspartate: step 3/4. Its function is as follows. Catalyzes the condensation of (S)-aspartate-beta-semialdehyde [(S)-ASA] and pyruvate to 4-hydroxy-tetrahydrodipicolinate (HTPA). The sequence is that of 4-hydroxy-tetrahydrodipicolinate synthase from Helicobacter pylori (strain G27).